A 1082-amino-acid polypeptide reads, in one-letter code: AP-3 complex subunit beta-2 (1082 aa).

The disordered stretch occupies residues M1–G30. 2 positions are modified to phosphoserine: S272 and S282. The span at N666–F677 shows a compositional bias: basic and acidic residues. Positions N666–P801 are disordered. Positions A691–E700 are enriched in acidic residues. Low complexity predominate over residues K704 to S715. 2 stretches are compositionally biased toward acidic residues: residues S716–E726 and V775–V784.

The protein belongs to the adaptor complexes large subunit family. Adaptor protein complex 3 (AP-3) is a heterotetramer composed of two large adaptins (delta-type subunit AP3D1 and beta-type subunit AP3B1 or AP3B2), a medium adaptin (mu-type subunit AP3M1 or AP3M2) and a small adaptin (sigma-type subunit APS1 or AP3S2). AP-3 associates with the BLOC-1 complex.

Its subcellular location is the cytoplasmic vesicle. It is found in the clathrin-coated vesicle membrane. It localises to the golgi apparatus. Functionally, subunit of non-clathrin- and clathrin-associated adaptor protein complex 3 (AP-3) that plays a role in protein sorting in the late-Golgi/trans-Golgi network (TGN) and/or endosomes. The AP complexes mediate both the recruitment of clathrin to membranes and the recognition of sorting signals within the cytosolic tails of transmembrane cargo molecules. AP-3 appears to be involved in the sorting of a subset of transmembrane proteins targeted to lysosomes and lysosome-related organelles. In concert with the BLOC-1 complex, AP-3 is required to target cargos into vesicles assembled at cell bodies for delivery into neurites and nerve terminals. The protein is AP-3 complex subunit beta-2 (Ap3b2) of Mus musculus (Mouse).